The chain runs to 306 residues: Leucine-rich repeat-containing protein 75B (306 aa).

The interval 1–22 (MGARLGRRARADAPAAPSAGPA) is disordered. A compositionally biased stretch (low complexity) spans 12 to 22 (DAPAAPSAGPA). LRR repeat units lie at residues 173–186 (LVVLDLSFTELSDE) and 198–211 (LPRLTQLLLNGNRL).

Belongs to the LRRC75 family.

Its function is as follows. May suppress myogenic differentiation by modulating MYOG expression and Erk1/2 signaling. The protein is Leucine-rich repeat-containing protein 75B of Mus musculus (Mouse).